We begin with the raw amino-acid sequence, 579 residues long: Glypican-2 (579 aa).

A signal peptide spans 1 to 23; the sequence is MSALRPLLLLLLPLCPGPGPGPG. O-linked (Xyl...) (heparan sulfate) serine glycosylation is found at serine 55, serine 92, and serine 155. 2 disordered regions span residues 444 to 468 and 485 to 555; these read GGSP…VPTR and ALGH…RSGG. Serine 500 and serine 502 each carry an O-linked (Xyl...) (heparan sulfate) serine glycan. Residues 520-529 show a composition bias toward pro residues; the sequence is PARPPRPPYP. The GPI-anchor amidated glycine moiety is linked to residue glycine 554. Positions 555 to 579 are cleaved as a propeptide — removed in mature form; that stretch reads GASIGFHTQTILILSLSALALLGPR.

It belongs to the glypican family. Interacts (via heparan sulfate) with PTN; this interaction promotes neurite outgrowth through binding of PTN with chondroitin sulfate of proteoglycans, thereby releasing PTPRS of chondroitin sulfate proteoglycans (CSPGs) and leading to binding with heparan sulfate of GPC2. Interacts (heparan sulfate chain) with MDK; this interaction is inhibited by heparin followed by chondroitin sulfate E; this interaction induces GPC2 clustering through heparan sulfate chain; this interaction induces neuronal cell adhesion and neurite outgrowth.

It is found in the cell membrane. It localises to the secreted. The protein localises to the extracellular space. Cell surface proteoglycan that bears heparan sulfate. May fulfill a function related to the motile behaviors of developing neurons. The chain is Glypican-2 (GPC2) from Homo sapiens (Human).